We begin with the raw amino-acid sequence, 120 residues long: Large ribosomal subunit protein uL18 (120 aa).

It belongs to the universal ribosomal protein uL18 family. Part of the 50S ribosomal subunit; part of the 5S rRNA/L5/L18/L25 subcomplex. Contacts the 5S and 23S rRNAs.

In terms of biological role, this is one of the proteins that bind and probably mediate the attachment of the 5S RNA into the large ribosomal subunit, where it forms part of the central protuberance. This Rhodopseudomonas palustris (strain HaA2) protein is Large ribosomal subunit protein uL18.